The chain runs to 160 residues: Ribosomal RNA large subunit methyltransferase H (160 aa).

Leu76 and Gly108 together coordinate S-adenosyl-L-methionine.

It belongs to the RNA methyltransferase RlmH family. Homodimer.

It localises to the cytoplasm. The enzyme catalyses pseudouridine(1915) in 23S rRNA + S-adenosyl-L-methionine = N(3)-methylpseudouridine(1915) in 23S rRNA + S-adenosyl-L-homocysteine + H(+). Specifically methylates the pseudouridine at position 1915 (m3Psi1915) in 23S rRNA. The protein is Ribosomal RNA large subunit methyltransferase H of Rhodopseudomonas palustris (strain BisB18).